The following is a 45-amino-acid chain: Scolopendra 20417.15 Da toxin (45 aa).

The segment at 26–45 is disordered; that stretch reads KVANGQEAGQPGAXNMKELH.

It belongs to the CRISP family. Venom allergen 5-like subfamily. Post-translationally, contains 3 disulfide bonds. As to expression, expressed by the venom gland.

It localises to the secreted. The polypeptide is Scolopendra 20417.15 Da toxin (Scolopendra viridicornis nigra (Brazilian giant centipede)).